The chain runs to 246 residues: Aliphatic sulfonates import ATP-binding protein SsuB 2 (246 aa).

The region spanning 4 to 218 (VTVRGLRRAF…RRDPRFEQAR (215 aa)) is the ABC transporter domain. Position 36–43 (36–43 (GRSGGGKT)) interacts with ATP.

Belongs to the ABC transporter superfamily. Aliphatic sulfonates importer (TC 3.A.1.17.2) family. The complex is composed of two ATP-binding proteins (SsuB), two transmembrane proteins (SsuC) and a solute-binding protein (SsuA).

It localises to the cell membrane. It carries out the reaction ATP + H2O + aliphatic sulfonate-[sulfonate-binding protein]Side 1 = ADP + phosphate + aliphatic sulfonateSide 2 + [sulfonate-binding protein]Side 1.. Functionally, part of the ABC transporter complex SsuABC involved in aliphatic sulfonates import. Responsible for energy coupling to the transport system. This is Aliphatic sulfonates import ATP-binding protein SsuB 2 from Frankia alni (strain DSM 45986 / CECT 9034 / ACN14a).